The chain runs to 135 residues: Helix-loop-helix protein 2 (135 aa).

The tract at residues methionine 1–alanine 81 is disordered. Over residues aspartate 10–proline 21 the composition is skewed to basic and acidic residues. The span at lysine 68–alanine 81 shows a compositional bias: basic residues. Residues lysine 77–leucine 129 form the bHLH domain.

As to quaternary structure, homodimer. Interacts and may form heterodimers with STAT3. Expressed in developing neurons. Transiently expressed in the cerebellum during postnatal development, exclusively in the premigratory zone of the external granule layer where postmitotic neurons undergo initial stages of neuronal differentiation. Expression is not detected in mature neurons. Expressed in the anterior lobe of the adult pituitary.

The protein localises to the nucleus. Its function is as follows. Transcription factor which binds the E box motif 5'-CA[TC][AG]TG-3'. Involved in regulating energy expenditure, body mass, voluntary physical activity, mating behavior and reproductive longevity, acting through the hypothalamic-pituitary-gonadal axis. Acts as a transcriptional activator of target genes, including Ndn, Pcsk1, Mc4r. Is also a transcriptional activator of KISS1. May act centrally to regulate function of both white and brown adipose tissue. Together with NHLH1, required to maintain migration and survival of cells in the anterior extramural migration stream (aes), which forms the precerebellar nuclei. Also, in concert with Nhlh1, may determine fate of gonadotropin releasing hormone-1 (GnRH-1) neurons. This is Helix-loop-helix protein 2 (Nhlh2) from Mus musculus (Mouse).